A 175-amino-acid polypeptide reads, in one-letter code: Transcriptional repressor NrdR (175 aa).

A zinc finger lies at 3-32 (CPYCSHPDSKVIDSRDVDDGVRRRRECVVC). The ATP-cone domain occupies 47-137 (LFVVKKDQRR…VYREFTDITQ (91 aa)).

The protein belongs to the NrdR family. The cofactor is Zn(2+).

Functionally, negatively regulates transcription of bacterial ribonucleotide reductase nrd genes and operons by binding to NrdR-boxes. This chain is Transcriptional repressor NrdR, found in Dehalococcoides mccartyi (strain CBDB1).